The primary structure comprises 551 residues: Structure-specific endonuclease subunit MUS81 (551 aa).

Disordered regions lie at residues 85 to 131 (LASG…AGYW) and 231 to 255 (PEEH…EVGV). Ser-95 is subject to Phosphoserine. Positions 110–131 (VQGSSMPVPTQPQAGSTNAGYW) are enriched in polar residues. The interaction with BLM stretch occupies residues 124-243 (GSTNAGYWPA…HHEESPVPEA (120 aa)). Residues 131–230 (WPAQNSGARE…GLSTLNTAFQ (100 aa)) are winged helix domain (WHD); critical for endonuclease activity. An ERCC4 domain is found at 270–372 (LLCVDIGETR…HRIYLVEEHG (103 aa)). Active-site residues include Asp-274, Glu-277, and Asp-307. Positions 274, 277, 307, 333, and 334 each coordinate Mg(2+). Residues 471 to 545 (VREVFARQLM…LSRTLYQLYC (75 aa)) are helix-hairpin-helix (2HhH); involved in DNA recognition and bending.

It belongs to the XPF family. Part of the heterodimeric DNA structure-specific endonuclease complex MUS81-EME1. Part of the heterodimeric DNA structure-specific endonuclease complex MUS81-EME2. Interacts with BLM; may stimulate the endonuclease activity of MUS81. Interacts with SLX4/BTBD12; this interaction is direct and links the MUS81-EME1 complex to SLX4, which may coordinate the action of the structure-specific endonuclease during DNA repair. Interacts with DCLRE1B/Apollo. Interacts with RECQL5; this interaction stimulates mitotic DNA synthesis. Interacts with CHEK2. The cofactor is Mg(2+).

It localises to the nucleus. It is found in the nucleolus. Functionally, catalytic subunit of two functionally distinct, structure-specific, heterodimeric DNA endonucleases MUS81-EME1 and MUS81-EME2 that are involved in the maintenance of genome stability. Both endonucleases have essentially the same substrate specificity though MUS81-EME2 is more active than its MUS81-EME1 counterpart. Both cleave 3'-flaps and nicked Holliday junctions, and exhibit limited endonuclease activity with 5' flaps and nicked double-stranded DNAs. MUS81-EME2 which is active during the replication of DNA is more specifically involved in replication fork processing. Replication forks frequently encounter obstacles to their passage, including DNA base lesions, DNA interstrand cross-links, difficult-to-replicate sequences, transcription bubbles, or tightly bound proteins. One mechanism for the restart of a stalled replication fork involves nucleolytic cleavage mediated by the MUS81-EME2 endonuclease. By acting upon the stalled fork, MUS81-EME2 generates a DNA double-strand break (DSB) that can be repaired by homologous recombination, leading to the restoration of an active fork. MUS81-EME2 could also function in telomere maintenance. MUS81-EME1, on the other hand, is active later in the cell cycle and functions in the resolution of mitotic recombination intermediates including the Holliday junctions, the four-way DNA intermediates that form during homologous recombination. This is Structure-specific endonuclease subunit MUS81 from Rattus norvegicus (Rat).